The following is a 112-amino-acid chain: Small ribosomal subunit protein bS6 (112 aa).

It belongs to the bacterial ribosomal protein bS6 family.

Binds together with bS18 to 16S ribosomal RNA. The protein is Small ribosomal subunit protein bS6 of Chlamydia abortus (strain DSM 27085 / S26/3) (Chlamydophila abortus).